A 280-amino-acid chain; its full sequence is Phosphonoacetaldehyde hydrolase (280 aa).

Asp-23 serves as the catalytic Nucleophile. Mg(2+) is bound by residues Asp-23 and Ala-25. The Schiff-base intermediate with substrate role is filled by Lys-64. Asp-197 contacts Mg(2+).

The protein belongs to the HAD-like hydrolase superfamily. PhnX family. In terms of assembly, homodimer. Requires Mg(2+) as cofactor.

The enzyme catalyses phosphonoacetaldehyde + H2O = acetaldehyde + phosphate + H(+). In terms of biological role, involved in phosphonate degradation. In Bordetella avium (strain 197N), this protein is Phosphonoacetaldehyde hydrolase.